A 121-amino-acid chain; its full sequence is Large ribosomal subunit protein bL19 (121 aa).

The protein belongs to the bacterial ribosomal protein bL19 family.

Functionally, this protein is located at the 30S-50S ribosomal subunit interface and may play a role in the structure and function of the aminoacyl-tRNA binding site. The sequence is that of Large ribosomal subunit protein bL19 from Borrelia garinii subsp. bavariensis (strain ATCC BAA-2496 / DSM 23469 / PBi) (Borreliella bavariensis).